Reading from the N-terminus, the 248-residue chain is tRNA (guanine-N(1)-)-methyltransferase (248 aa).

Residues Gly-117 and 137 to 142 (LGDFVL) contribute to the S-adenosyl-L-methionine site.

The protein belongs to the RNA methyltransferase TrmD family. As to quaternary structure, homodimer.

Its subcellular location is the cytoplasm. The catalysed reaction is guanosine(37) in tRNA + S-adenosyl-L-methionine = N(1)-methylguanosine(37) in tRNA + S-adenosyl-L-homocysteine + H(+). Specifically methylates guanosine-37 in various tRNAs. This chain is tRNA (guanine-N(1)-)-methyltransferase, found in Herminiimonas arsenicoxydans.